A 426-amino-acid polypeptide reads, in one-letter code: MNIISVGVNHKTAPIEIRERISLSEVQNKEFITGLVSSGLAHEAMVLSTCNRTELYVVPAMHEVTGEFLKEYLISYRDARKEVRPEHFFSRFYCSTARHLFEVASAIDSLVLGEGQILGQVKNAYRIAAEAQCAGIMITRLCHTAFSVAKKVKTKTRIMEGAVSVSYAAVELAQKIFSNLSLKKVLLVGAGETGELAAKHMFAKNARNIVITNRTISKAEALAEELGTNQVLPYESYKEHLHEFDIIITAVSTKDYALTEADMQPAMARRKLKPVIILDLGLPRNVDPNISKLQNMFLKDIDDLKHIIDKNLEKRRRELPKVHAIIEEELIAFGQWINTLKVRPTIVDLQSKFIEIKEKELERYRYKVSEEELQRMEHLTDRILKKILHHPIKMLKAPIDTTDSIPSRVNLVRNVFDLEEPNQSHF.

Substrate-binding positions include 49 to 52 (TCNR), Ser-109, 114 to 116 (EGQ), and Gln-120. The active-site Nucleophile is the Cys-50. Position 189 to 194 (189 to 194 (GAGETG)) interacts with NADP(+).

Belongs to the glutamyl-tRNA reductase family. As to quaternary structure, homodimer.

The enzyme catalyses (S)-4-amino-5-oxopentanoate + tRNA(Glu) + NADP(+) = L-glutamyl-tRNA(Glu) + NADPH + H(+). It participates in porphyrin-containing compound metabolism; protoporphyrin-IX biosynthesis; 5-aminolevulinate from L-glutamyl-tRNA(Glu): step 1/2. It functions in the pathway porphyrin-containing compound metabolism; chlorophyll biosynthesis. Functionally, catalyzes the NADPH-dependent reduction of glutamyl-tRNA(Glu) to glutamate 1-semialdehyde (GSA). The polypeptide is Glutamyl-tRNA reductase (Chlorobium chlorochromatii (strain CaD3)).